The primary structure comprises 166 residues: Probable chemoreceptor glutamine deamidase CheD (166 aa).

The protein belongs to the CheD family.

It catalyses the reaction L-glutaminyl-[protein] + H2O = L-glutamyl-[protein] + NH4(+). In terms of biological role, probably deamidates glutamine residues to glutamate on methyl-accepting chemotaxis receptors (MCPs), playing an important role in chemotaxis. The polypeptide is Probable chemoreceptor glutamine deamidase CheD (Clostridium acetobutylicum (strain ATCC 824 / DSM 792 / JCM 1419 / IAM 19013 / LMG 5710 / NBRC 13948 / NRRL B-527 / VKM B-1787 / 2291 / W)).